Reading from the N-terminus, the 39-residue chain is Hementin (39 aa).

A divalent metal cation serves as cofactor. In terms of tissue distribution, expressed mainly in the posterior salivary glands and, to a lesser extent, in the anterior salivary glands and secreted into the proboscis (at protein level).

Its subcellular location is the secreted. With respect to regulation, inhibited by EDTA, cysteine, DTT and sodium phosphate. Partially inhibited by EGTA, citrate, Tris and glycine. Not inhibited by DFP, PMSF, iodoacetic acid and leupeptin. Requires sodium chloride concentrations higher than 0.15 M for activity. Its function is as follows. Metalloprotease with anticoagulant activity. Cleaves fibrinogen Aalpha (FGA), gamma (FGG) and Bbeta (FGB) chains after positions 'Asn-121', 'Lys-160' and 'Pro-102', respectively. Breaks down cross-linked and non-cross-linked fibrin clots. Prevents and reverts platelet aggregation induced by ADP and collagen. Prevents thrombin-induced platelet clotting. Does not affect plasma levels of coagulation factors prothrombin (F2), V (F5), VII (F7), VIII (F8), IX (F9), X (F10), XI (F11), XII (F12), plasma kallikrein (KLKB1) and kininogen-1 (KNG1). The protein is Hementin of Haementeria ghilianii (Amazon leech).